The primary structure comprises 178 residues: uncharacterized protein (178 aa).

This is an uncharacterized protein from Sulfolobus islandicus filamentous virus (isolate Iceland/Hveragerdi) (SIFV).